A 616-amino-acid polypeptide reads, in one-letter code: Chaperone protein HscA (616 aa).

The protein belongs to the heat shock protein 70 family.

In terms of biological role, chaperone involved in the maturation of iron-sulfur cluster-containing proteins. Has a low intrinsic ATPase activity which is markedly stimulated by HscB. Involved in the maturation of IscU. This is Chaperone protein HscA from Salmonella paratyphi C (strain RKS4594).